A 520-amino-acid chain; its full sequence is Poly(A)-specific ribonuclease PNLDC1 (520 aa).

The Mg(2+) site is built by Asp-17, Glu-19, Asp-260, and Asp-354. A helical membrane pass occupies residues 495–515 (VNCLLQVCGIVTAWALLAFIL).

The protein belongs to the CAF1 family. The cofactor is Mg(2+).

The protein resides in the endoplasmic reticulum membrane. It catalyses the reaction Exonucleolytic cleavage of poly(A) to 5'-AMP.. Functionally, 3'-exoribonuclease that has a preference for poly(A) tails of mRNAs, thereby efficiently degrading poly(A) tails. Exonucleolytic degradation of the poly(A) tail is often the first step in the decay of eukaryotic mRNAs and is also used to silence certain maternal mRNAs translationally during oocyte maturation and early embryonic development. May act as a regulator of multipotency in embryonic stem cells. Is a critical factor for proper spermatogenesis, involved in pre-piRNAs processing to generate mature piRNAs. The chain is Poly(A)-specific ribonuclease PNLDC1 from Homo sapiens (Human).